A 97-amino-acid chain; its full sequence is MRLHFLFYRSIEFMYYKKSRHKIFCITLSLYFLTAHKRPSARNPITDFFSRIWGPCFYKWSRHQLLLVNQLMLSPCRNKCSLTSADQCITANEDTTK.

This is an uncharacterized protein from Alcelaphine herpesvirus 1 (strain C500) (AlHV-1).